The following is a 500-amino-acid chain: ATP synthase subunit alpha (500 aa).

167–174 (GDRQTGKT) is an ATP binding site.

It belongs to the ATPase alpha/beta chains family. F-type ATPases have 2 components, CF(1) - the catalytic core - and CF(0) - the membrane proton channel. CF(1) has five subunits: alpha(3), beta(3), gamma(1), delta(1), epsilon(1). CF(0) has three main subunits: a(1), b(2) and c(9-12). The alpha and beta chains form an alternating ring which encloses part of the gamma chain. CF(1) is attached to CF(0) by a central stalk formed by the gamma and epsilon chains, while a peripheral stalk is formed by the delta and b chains.

Its subcellular location is the cell inner membrane. The catalysed reaction is ATP + H2O + 4 H(+)(in) = ADP + phosphate + 5 H(+)(out). Functionally, produces ATP from ADP in the presence of a proton gradient across the membrane. The alpha chain is a regulatory subunit. The polypeptide is ATP synthase subunit alpha (Wolinella succinogenes (strain ATCC 29543 / DSM 1740 / CCUG 13145 / JCM 31913 / LMG 7466 / NCTC 11488 / FDC 602W) (Vibrio succinogenes)).